Here is a 335-residue protein sequence, read N- to C-terminus: 1D-myo-inositol 2-acetamido-2-deoxy-alpha-D-glucopyranoside deacetylase (335 aa).

Zn(2+) is bound by residues His19, Asp22, and His158.

The protein belongs to the MshB deacetylase family. Zn(2+) serves as cofactor.

The enzyme catalyses 1D-myo-inositol 2-acetamido-2-deoxy-alpha-D-glucopyranoside + H2O = 1D-myo-inositol 2-amino-2-deoxy-alpha-D-glucopyranoside + acetate. Its function is as follows. Catalyzes the deacetylation of 1D-myo-inositol 2-acetamido-2-deoxy-alpha-D-glucopyranoside (GlcNAc-Ins) in the mycothiol biosynthesis pathway. The protein is 1D-myo-inositol 2-acetamido-2-deoxy-alpha-D-glucopyranoside deacetylase of Corynebacterium urealyticum (strain ATCC 43042 / DSM 7109).